Consider the following 228-residue polypeptide: Protein ULTRAPETALA 2 (228 aa).

Residues 14–121 enclose the SAND domain; sequence EELQEISGVH…NKALKNSNVS (108 aa).

In terms of tissue distribution, expressed in influorescence, pollen and siliques, with a higher expression in influorescence.

Its subcellular location is the cytoplasm. It localises to the nucleus. Putative transcription factor that acts as a key negative regulator of cell accumulation in shoot and floral meristems. Negatively regulates the size of the WUSCHEL (WUS)-expressing organizing center in inflorescence meristems. May act by down-regulating expression of WUS. Can compensate for mutant ULT1 protein when overexpressed. This Arabidopsis thaliana (Mouse-ear cress) protein is Protein ULTRAPETALA 2 (ULT2).